Here is a 162-residue protein sequence, read N- to C-terminus: ATP synthase subunit b (162 aa).

Residues 6 to 26 (PDIGLLFWMLLSFGIVFFVAA) traverse the membrane as a helical segment.

It belongs to the ATPase B chain family. As to quaternary structure, F-type ATPases have 2 components, F(1) - the catalytic core - and F(0) - the membrane proton channel. F(1) has five subunits: alpha(3), beta(3), gamma(1), delta(1), epsilon(1). F(0) has three main subunits: a(1), b(2) and c(10-14). The alpha and beta chains form an alternating ring which encloses part of the gamma chain. F(1) is attached to F(0) by a central stalk formed by the gamma and epsilon chains, while a peripheral stalk is formed by the delta and b chains.

It localises to the cell inner membrane. F(1)F(0) ATP synthase produces ATP from ADP in the presence of a proton or sodium gradient. F-type ATPases consist of two structural domains, F(1) containing the extramembraneous catalytic core and F(0) containing the membrane proton channel, linked together by a central stalk and a peripheral stalk. During catalysis, ATP synthesis in the catalytic domain of F(1) is coupled via a rotary mechanism of the central stalk subunits to proton translocation. Functionally, component of the F(0) channel, it forms part of the peripheral stalk, linking F(1) to F(0). The protein is ATP synthase subunit b of Azobacteroides pseudotrichonymphae genomovar. CFP2.